Consider the following 265-residue polypeptide: Methylthioribulose-1-phosphate dehydratase (265 aa).

A substrate-binding site is contributed by Cys-116. Residues His-134 and His-136 each contribute to the Zn(2+) site. Glu-159 acts as the Proton donor/acceptor in catalysis. Zn(2+) is bound at residue His-224.

This sequence belongs to the aldolase class II family. MtnB subfamily. Zn(2+) is required as a cofactor.

The protein localises to the cytoplasm. It carries out the reaction 5-(methylsulfanyl)-D-ribulose 1-phosphate = 5-methylsulfanyl-2,3-dioxopentyl phosphate + H2O. It functions in the pathway amino-acid biosynthesis; L-methionine biosynthesis via salvage pathway; L-methionine from S-methyl-5-thio-alpha-D-ribose 1-phosphate: step 2/6. In terms of biological role, catalyzes the dehydration of methylthioribulose-1-phosphate (MTRu-1-P) into 2,3-diketo-5-methylthiopentyl-1-phosphate (DK-MTP-1-P). In Debaryomyces hansenii (strain ATCC 36239 / CBS 767 / BCRC 21394 / JCM 1990 / NBRC 0083 / IGC 2968) (Yeast), this protein is Methylthioribulose-1-phosphate dehydratase.